Consider the following 303-residue polypeptide: MLSTHLLFLATTLLTSLFHPIAAHVAKRSGSLQQITDFGDNPTGVGMYIYVPNNLASNPGIVVAIHYCTGTGPGYYSNSPYATLSEQYGFIVIYPSSPYSGGCWDVSSQATLTHNGGGNSNSIANMVTWTISEYGADSKKVYVTGSSSGAMMTNVMAATYPELFAAGTVYSGVSAGCFYSDTNQVDGWNSTCAQGDVITTPEHWASIAEAMYPGYSGSRPKMQIYHGSVDTTLYPQNYYETCKQWAGVFGYDYSAPESTEANTPQTNYETTIWGDNLQGIFATGVGHTVPIHGDKDMEWFGFA.

The N-terminal stretch at 1-23 (MLSTHLLFLATTLLTSLFHPIAA) is a signal peptide. Ser-147 functions as the Charge relay system in the catalytic mechanism. Asn-189 is a glycosylation site (N-linked (GlcNAc...) asparagine).

It belongs to the carbohydrate esterase 1 (CE1) family. AxeA subfamily. Monomer. Glycosylated.

The protein localises to the secreted. It carries out the reaction Deacetylation of xylans and xylo-oligosaccharides.. The protein operates within glycan degradation; xylan degradation. Functionally, acetylxylan esterase involved in the hydrolysis of xylan, a major structural heterogeneous polysaccharide found in plant biomass representing the second most abundant polysaccharide in the biosphere, after cellulose. Degrades acetylated xylans by cleaving acetyl side groups from the hetero-xylan backbone. The sequence is that of Acetylxylan esterase A (axeA) from Aspergillus ficuum.